The following is a 123-amino-acid chain: UPF0102 protein PSPPH_4120 (123 aa).

Belongs to the UPF0102 family.

This Pseudomonas savastanoi pv. phaseolicola (strain 1448A / Race 6) (Pseudomonas syringae pv. phaseolicola (strain 1448A / Race 6)) protein is UPF0102 protein PSPPH_4120.